A 557-amino-acid polypeptide reads, in one-letter code: MSNPRHNEREVRSPRGDELNAKSWLTEAPLRMLMNNLDPDVAERPHELVVYGGIGRAARTWDDFDRIVATLKTLNDDETLLVQSGKPVGVFRTHKDAPRVLIANSNLVPHWANWDHFNELDKKDLAMYGQMTAGSWIYIGAQGIVQGTYETFVEAGRQHYGGNLKGRWILTGGLGGMGGAQPLAAVMAGACCLAVECDETRADFRLRTRYVDEKTHSLDEALAKIDAWTKAGEAKSIALIGNAAEIFPELVKRGVKPDIVTDQTSAHDPVHGYLPLGWTVAEWRAKQENDPKAVEKAARASMKVQVQAMLDFWNAGIPTVDYGNNIRQMALEEGLENAFAFPGFVPAYIRPLFCRGIGPFRWAALSGDPEDIAKTDAKVKELLPDNKHLHNWLDMAKERIAFQGLPARICWVGLGDRHRLGLAFNEMVRNGELKAPIVIGRDHLDSGSVASPNRETEAMKDGSDAVSDWPLLNALLNTASGATWVSLHHGGGVGMGFSQHAGMVICCDGTEDADRRLERVLWNDPATGVMRHADAGYDIALDWARKQGLRLPAILGN.

The interval 1–20 (MSNPRHNEREVRSPRGDELN) is disordered. Residues 52-53 (GG), Gln130, 176-178 (GMG), Glu196, Arg201, 242-243 (NA), 263-267 (QTSAH), 273-274 (YL), and Tyr322 each bind NAD(+). The active site involves Cys410. Gly492 is a binding site for NAD(+).

This sequence belongs to the urocanase family. NAD(+) serves as cofactor.

The protein localises to the cytoplasm. It carries out the reaction 4-imidazolone-5-propanoate = trans-urocanate + H2O. It participates in amino-acid degradation; L-histidine degradation into L-glutamate; N-formimidoyl-L-glutamate from L-histidine: step 2/3. In terms of biological role, catalyzes the conversion of urocanate to 4-imidazolone-5-propionate. The polypeptide is Urocanate hydratase (Brucella suis (strain ATCC 23445 / NCTC 10510)).